The sequence spans 127 residues: C-C motif chemokine 28 (127 aa).

A signal peptide spans 1–19; sequence MQQRGLAIVALAVCAALHA. Disulfide bonds link Cys-30-Cys-58 and Cys-31-Cys-73. A glycan (N-linked (GlcNAc...) asparagine) is linked at Asn-78. Basic residues predominate over residues 92–115; the sequence is KNGKGNVCHRKKHHGKRNSNRAHQ. The segment at 92–127 is disordered; the sequence is KNGKGNVCHRKKHHGKRNSNRAHQGKHETYGHKTPY. Over residues 116–127 the composition is skewed to basic and acidic residues; sequence GKHETYGHKTPY.

Belongs to the intercrine beta (chemokine CC) family. Preferentially expressed by epithelial cells of diverse tissues including normal and pathological colon, salivary gland, mammary gland, trachea and rectum. Also found in prostate, spleen, thyroid, psoriasis skin and in lower levels in peripheral blood leukocytes, small intestine, Peyer patches, stomach and normal skin.

The protein resides in the secreted. Functionally, chemotactic activity for resting CD4, CD8 T-cells and eosinophils. Binds to CCR3 and CCR10 and induces calcium mobilization in a dose-dependent manner. This Homo sapiens (Human) protein is C-C motif chemokine 28 (CCL28).